The chain runs to 345 residues: Uroporphyrinogen decarboxylase (345 aa).

Substrate-binding positions include 27–31 (RQAGR), Phe-46, Asp-76, Tyr-152, Ser-207, and His-320.

It belongs to the uroporphyrinogen decarboxylase family. In terms of assembly, homodimer.

It is found in the cytoplasm. It carries out the reaction uroporphyrinogen III + 4 H(+) = coproporphyrinogen III + 4 CO2. Its pathway is porphyrin-containing compound metabolism; protoporphyrin-IX biosynthesis; coproporphyrinogen-III from 5-aminolevulinate: step 4/4. In terms of biological role, catalyzes the decarboxylation of four acetate groups of uroporphyrinogen-III to yield coproporphyrinogen-III. In Oceanobacillus iheyensis (strain DSM 14371 / CIP 107618 / JCM 11309 / KCTC 3954 / HTE831), this protein is Uroporphyrinogen decarboxylase.